Here is a 670-residue protein sequence, read N- to C-terminus: Septation protein 7 (670 aa).

One can recognise a Septin-type G domain in the interval 33–357; the sequence is KGIKFTFMVV…ETYRTERLTK (325 aa). Positions 43 to 50 are G1 motif; that stretch reads GESGTGKT. GTP-binding positions include 43–50, glycine 137, 217–225, and arginine 306; these read GESGTGKT and KADSFTLNE. Residues 134-137 are G3 motif; it reads DTPG. The tract at residues 216–219 is G4 motif; that stretch reads GKAD. Disordered stretches follow at residues 383–513 and 574–670; these read LNDS…QRNQ and LNRQ…VSNH. Low complexity predominate over residues 395-404; it reads NNNNNNNNNN. A compositionally biased stretch (polar residues) spans 405-421; that stretch reads ASTIPSMSNLAQLTTST. 2 stretches are compositionally biased toward low complexity: residues 433–446 and 463–473; these read SITS…KSTS and SSFTSSTSTVS. A coiled-coil region spans residues 472–606; it reads VSLEGGEKEG…SVQSGGVDDG (135 aa). Basic and acidic residues predominate over residues 476 to 487; it reads GGEKEGGHHDRG. Residues 489–500 show a composition bias toward low complexity; sequence NSTSTNNNNNNN. The segment covering 631–645 has biased composition (basic and acidic residues); the sequence is QSHEYDNSEYHHDDS.

This sequence belongs to the TRAFAC class TrmE-Era-EngA-EngB-Septin-like GTPase superfamily. Septin GTPase family. As to quaternary structure, component of the septin complex which consists of CDC3, CDC10, CDC11, CDC12 and probably SEP7. The purified septin complex appeared to have a stoichiometry of 2 CDC3, 1 to 2 CDC10, 1 CDC11, 2 CDC12, and 1 or none SEP7 subunit. Induction of hyphal growth brings about important modifications in septin ring dynamics, because the rings were found in a different state from those of yeast cells. This hyphal-specific state contains a core of stable septins (SEP7, CDC3, and CDC12), and it shows a high CDC10 turnover between the ring and the cytoplasm. Interacts with GIN4. In terms of processing, phosphorylated by GIN4 which stabilizes the GIN4-SEP7 interaction.

It localises to the bud neck. Functionally, septins are GTPases involved in cytokinesis that assemble early in the cell cycle as a patch at the incipient bud site and form a ring before bud emergence, which transforms into an hour-glass shaped collar of cortical filaments that spans both sides of the mother-bud neck. This collar persists until just before cytokinesis, when it splits into two rings that occupy opposite sides of the neck. The septins at the bud neck serve as a structural scaffold that recruits different components involved in diverse processes at specific stages during the cell cycle. Many proteins bind asymmetrically to the septin collar. The septin assembly is regulated by protein kinase GIN4. Septins are also involved in cell morphogenesis, chlamydospores morphogenesis, bud site selection, chitin deposition, cell cycle regulation, cell compartmentalization and spore wall formation. SEP7 is required to convert hyphal septin rings into the hyphal-specific state and is necessary for CDC10 turnover during hyphal growth. The sequence is that of Septation protein 7 (SEP7) from Candida albicans (strain SC5314 / ATCC MYA-2876) (Yeast).